A 579-amino-acid chain; its full sequence is Potassium-transporting ATPase potassium-binding subunit (579 aa).

The next 10 helical transmembrane spans lie at 2-22, 66-86, 135-155, 177-197, 260-280, 292-312, 391-411, 437-457, 490-510, and 546-566; these read MNLV…AIPL, SFSV…LHIF, GLTV…FALI, VLYI…SQGV, TILS…ALCF, GIAI…IVGV, VFGG…LAVF, VLVC…ASIL, FAGF…SMIF, and FIGL…FPAL.

The protein belongs to the KdpA family. The system is composed of three essential subunits: KdpA, KdpB and KdpC.

Its subcellular location is the cell membrane. Part of the high-affinity ATP-driven potassium transport (or Kdp) system, which catalyzes the hydrolysis of ATP coupled with the electrogenic transport of potassium into the cytoplasm. This subunit binds the extracellular potassium ions and delivers the ions to the membrane domain of KdpB through an intramembrane tunnel. The protein is Potassium-transporting ATPase potassium-binding subunit of Clostridium botulinum (strain Eklund 17B / Type B).